Consider the following 293-residue polypeptide: Ribosomal protein L11 methyltransferase (293 aa).

4 residues coordinate S-adenosyl-L-methionine: Thr-145, Gly-166, Asp-188, and Asn-230.

It belongs to the methyltransferase superfamily. PrmA family.

It localises to the cytoplasm. It carries out the reaction L-lysyl-[protein] + 3 S-adenosyl-L-methionine = N(6),N(6),N(6)-trimethyl-L-lysyl-[protein] + 3 S-adenosyl-L-homocysteine + 3 H(+). Methylates ribosomal protein L11. In Escherichia coli O8 (strain IAI1), this protein is Ribosomal protein L11 methyltransferase.